Reading from the N-terminus, the 132-residue chain is Nitrogenase iron-iron protein delta chain (132 aa).

Hexamer of two alpha, two beta, and two delta chains. The cofactor is iron-sulfur cluster.

The enzyme catalyses N2 + 8 reduced [2Fe-2S]-[ferredoxin] + 16 ATP + 16 H2O = H2 + 8 oxidized [2Fe-2S]-[ferredoxin] + 2 NH4(+) + 16 ADP + 16 phosphate + 6 H(+). Its function is as follows. The key enzymatic reactions in nitrogen fixation are catalyzed by the nitrogenase complex, which has 2 components: the iron protein (component 2) and a component 1 which is either a molybdenum-iron protein, a vanadium-iron, or an iron-iron protein. The polypeptide is Nitrogenase iron-iron protein delta chain (anfG) (Ruminiclostridium hungatei (Clostridium hungatei)).